Here is a 758-residue protein sequence, read N- to C-terminus: Polyribonucleotide nucleotidyltransferase (758 aa).

Aspartate 488 and aspartate 494 together coordinate Mg(2+). The 60-residue stretch at 555-614 folds into the KH domain; the sequence is PKLYTMKINPEKIRDVIGKGGAVIRALTEETGTQINIDEDGTITIASTDSAKADEAKRRI. Positions 624–692 constitute an S1 motif domain; it reads GKIYEGPVVK…EKGRVKLSMR (69 aa). The interval 692-758 is disordered; the sequence is RALLDRPMGD…AGEHSGQMDA (67 aa). Residues 707–735 are compositionally biased toward basic and acidic residues; the sequence is PAERGERGDRGDRGDRPERGERRERREPA. Low complexity predominate over residues 736 to 745; it reads GADQQQQQQQ.

This sequence belongs to the polyribonucleotide nucleotidyltransferase family. Mg(2+) serves as cofactor.

The protein localises to the cytoplasm. The enzyme catalyses RNA(n+1) + phosphate = RNA(n) + a ribonucleoside 5'-diphosphate. In terms of biological role, involved in mRNA degradation. Catalyzes the phosphorolysis of single-stranded polyribonucleotides processively in the 3'- to 5'-direction. This chain is Polyribonucleotide nucleotidyltransferase, found in Paracidovorax citrulli (strain AAC00-1) (Acidovorax citrulli).